A 518-amino-acid chain; its full sequence is ATP synthase subunit alpha (518 aa).

ATP is bound at residue 169-176 (GDRKTGKT).

Belongs to the ATPase alpha/beta chains family. F-type ATPases have 2 components, CF(1) - the catalytic core - and CF(0) - the membrane proton channel. CF(1) has five subunits: alpha(3), beta(3), gamma(1), delta(1), epsilon(1). CF(0) has three main subunits: a(1), b(2) and c(9-12). The alpha and beta chains form an alternating ring which encloses part of the gamma chain. CF(1) is attached to CF(0) by a central stalk formed by the gamma and epsilon chains, while a peripheral stalk is formed by the delta and b chains.

It is found in the cell membrane. The enzyme catalyses ATP + H2O + 4 H(+)(in) = ADP + phosphate + 5 H(+)(out). Functionally, produces ATP from ADP in the presence of a proton gradient across the membrane. The alpha chain is a regulatory subunit. The polypeptide is ATP synthase subunit alpha (Enterococcus faecalis (strain ATCC 700802 / V583)).